The following is a 377-amino-acid chain: 3-dehydroquinate synthase (377 aa).

Residues 113 to 117 (GVIGD), 137 to 138 (TT), K150, K159, and 177 to 180 (FLDT) contribute to the NAD(+) site. Zn(2+) contacts are provided by E192, H254, and H273.

Belongs to the sugar phosphate cyclases superfamily. Dehydroquinate synthase family. Co(2+) is required as a cofactor. Zn(2+) serves as cofactor. Requires NAD(+) as cofactor.

The protein resides in the cytoplasm. The enzyme catalyses 7-phospho-2-dehydro-3-deoxy-D-arabino-heptonate = 3-dehydroquinate + phosphate. Its pathway is metabolic intermediate biosynthesis; chorismate biosynthesis; chorismate from D-erythrose 4-phosphate and phosphoenolpyruvate: step 2/7. Functionally, catalyzes the conversion of 3-deoxy-D-arabino-heptulosonate 7-phosphate (DAHP) to dehydroquinate (DHQ). This chain is 3-dehydroquinate synthase, found in Bartonella quintana (strain Toulouse) (Rochalimaea quintana).